Here is a 445-residue protein sequence, read N- to C-terminus: Xylose isomerase (445 aa).

Catalysis depends on residues histidine 107 and aspartate 110. Residues glutamate 238, glutamate 274, histidine 277, aspartate 302, aspartate 313, aspartate 315, and aspartate 345 each coordinate Mg(2+).

The protein belongs to the xylose isomerase family. In terms of assembly, homotetramer. Mg(2+) serves as cofactor.

It is found in the cytoplasm. It carries out the reaction alpha-D-xylose = alpha-D-xylulofuranose. The chain is Xylose isomerase from Bacillus cereus (strain ATCC 10987 / NRS 248).